A 411-amino-acid polypeptide reads, in one-letter code: Argininosuccinate synthase (411 aa).

ATP-binding positions include 10 to 18 (AYSGGLDTS) and alanine 37. The L-citrulline site is built by tyrosine 89 and serine 94. Glycine 119 is an ATP binding site. Residues threonine 121, asparagine 125, and aspartate 126 each coordinate L-aspartate. Asparagine 125 contacts L-citrulline. Residues arginine 129, serine 178, serine 187, glutamate 263, and tyrosine 275 each coordinate L-citrulline.

It belongs to the argininosuccinate synthase family. Type 1 subfamily. Homotetramer.

The protein resides in the cytoplasm. It carries out the reaction L-citrulline + L-aspartate + ATP = 2-(N(omega)-L-arginino)succinate + AMP + diphosphate + H(+). It functions in the pathway amino-acid biosynthesis; L-arginine biosynthesis; L-arginine from L-ornithine and carbamoyl phosphate: step 2/3. The chain is Argininosuccinate synthase from Aeromonas hydrophila subsp. hydrophila (strain ATCC 7966 / DSM 30187 / BCRC 13018 / CCUG 14551 / JCM 1027 / KCTC 2358 / NCIMB 9240 / NCTC 8049).